We begin with the raw amino-acid sequence, 226 residues long: V-type proton ATPase subunit E 2 (226 aa).

Belongs to the V-ATPase E subunit family. In terms of assembly, V-ATPase is a heteromultimeric enzyme made up of two complexes: the ATP-hydrolytic V1 complex and the proton translocation V0 complex. The V1 complex consists of three catalytic AB heterodimers that form a heterohexamer, three peripheral stalks each consisting of EG heterodimers, one central rotor including subunits D and F, and the regulatory subunits C and H. The proton translocation complex V0 consists of the proton transport subunit a, a ring of proteolipid subunits c9c'', rotary subunit d, subunits e and f, and the accessory subunits ATP6AP1/Ac45 and ATP6AP2/PRR. In terms of tissue distribution, testis specific.

Its function is as follows. Subunit of the V1 complex of vacuolar(H+)-ATPase (V-ATPase), a multisubunit enzyme composed of a peripheral complex (V1) that hydrolyzes ATP and a membrane integral complex (V0) that translocates protons. V-ATPase is responsible for acidifying and maintaining the pH of intracellular compartments and in some cell types, is targeted to the plasma membrane, where it is responsible for acidifying the extracellular environment. This Mus musculus (Mouse) protein is V-type proton ATPase subunit E 2 (Atp6v1e2).